Consider the following 407-residue polypeptide: Putative ammonium transporter MTH_661 (407 aa).

12 consecutive transmembrane segments (helical) span residues 9 to 29 (AWML…VAMF), 47 to 67 (FVSL…LIFG), 70 to 90 (VSGI…GSAS), 101 to 121 (FAIF…GAVV), 129 to 149 (WILF…HWVW), 162 to 182 (FAGG…LALV), 196 to 216 (LGYS…FNAG), 226 to 246 (ANAM…WILM), 257 to 277 (LGAL…AGFV), 279 to 299 (IGAS…AVSW), 312 to 332 (VFGI…LFAV), and 357 to 377 (IGVV…AMLL).

The protein belongs to the ammonia transporter channel (TC 1.A.11.2) family.

The protein localises to the cell membrane. This is Putative ammonium transporter MTH_661 from Methanothermobacter thermautotrophicus (strain ATCC 29096 / DSM 1053 / JCM 10044 / NBRC 100330 / Delta H) (Methanobacterium thermoautotrophicum).